The sequence spans 1480 residues: Cystic fibrosis transmembrane conductance regulator (1480 aa).

The Cytoplasmic segment spans residues 1-77 (MQRSPLEKAS…KLINALRRCF (77 aa)). A helical transmembrane segment spans residues 78–98 (FWRFMFYGILLYLGEVTKAVQ). One can recognise an ABC transmembrane type-1 1 domain in the interval 81–365 (FMFYGILLYL…WAVQTWYDSL (285 aa)). The Extracellular segment spans residues 99 to 122 (PLLLGRIIASYDPDNKTERSIAIY). A helical transmembrane segment spans residues 123–146 (LGIGLCLLFIVRTLLLHPAIFGLH). At 147-195 (HIGMQMRIAMFSLIYKKTLKLSSRVLDKISIGQLVSLLSNNLNKFDEGL) the chain is on the cytoplasmic side. Residues 196-216 (ALAHFVWIAPLQVALLMGLIW) form a helical membrane-spanning segment. Topologically, residues 217 to 222 (ELLQAS) are extracellular. The chain crosses the membrane as a helical span at residues 223-243 (AFCGLGFLIVLALFQAGLGRM). The Cytoplasmic portion of the chain corresponds to 244–298 (MMKYRDQRAGKINERLVITSEMIENIQSVKAYCWEEAMEKMIENLRQTELKLTRK). Residues 299–319 (AAYVRYFNSSAFFFSGFFVVF) form a helical membrane-spanning segment. The Extracellular segment spans residues 320-339 (LSVLPYALIKGIVLRKIFTT). The chain crosses the membrane as a helical span at residues 340–358 (ISFCIVLRMAVTRQFPWAV). The Cytoplasmic segment spans residues 359 to 858 (QTWYDSLGAI…YLRYITLHKS (500 aa)). ATP is bound by residues tryptophan 401, serine 434, 458–465 (GSTGAGKT), and glutamine 493. The 224-residue stretch at 423–646 (NGDDNLFFSN…RPDFSSKLMG (224 aa)) folds into the ABC transporter 1 domain. Residue cysteine 524 is the site of S-palmitoyl cysteine attachment. Residues serine 549 and serine 660 each carry the phosphoserine modification. Residues 654 to 831 (SSERRNSILT…EEINEEDLKE (178 aa)) form a disordered R region region. At serine 670 the chain carries Phosphoserine; by PKA. The residue at position 686 (serine 686) is a Phosphoserine. Lysine 688 participates in a covalent cross-link: Glycyl lysine isopeptide (Lys-Gly) (interchain with G-Cter in ubiquitin). 2 positions are modified to phosphoserine: serine 700 and serine 712. Threonine 717 carries the post-translational modification Phosphothreonine. 6 positions are modified to phosphoserine: serine 737, serine 753, serine 768, serine 790, serine 795, and serine 813. A helical membrane pass occupies residues 859–879 (LIFVLIWCLVIFLAEVAASLV). The ABC transmembrane type-1 2 domain maps to 859 to 1155 (LIFVLIWCLV…AVNSSIDVDS (297 aa)). The Extracellular portion of the chain corresponds to 880–918 (VLWFLGNTPFQDKGNSTYSRNNSYAVIITNTSSYYVFYI). N-linked (GlcNAc...) asparagine glycans are attached at residues asparagine 894, asparagine 900, and asparagine 909. A discontinuously helical membrane pass occupies residues 919–939 (YVGVADTLLALGFFRGLPLVH). Topologically, residues 940–990 (TLITVSKILHHKMLHSVLQAPMSTLNTLKAGGILNRFSKDIAILDDLLPLT) are cytoplasmic. Residues 991 to 1011 (IFDFIQLLLIVIGAIAVVSVL) traverse the membrane as a helical segment. At 1012–1013 (QP) the chain is on the extracellular side. The helical transmembrane segment at 1014–1034 (YILLATVPVIAAFILLRAYFL) threads the bilayer. At 1035–1095 (QTSQQLKQLE…TANWFLYLAT (61 aa)) the chain is on the cytoplasmic side. Residues 1096-1116 (LRWFQMRIEIIFVIFFIAVTF) form a helical membrane-spanning segment. Topologically, residues 1117–1130 (ISILTTGEGEGTVG) are extracellular. A helical transmembrane segment spans residues 1131–1151 (IILTLAMNIMSTLQWAVNSSI). Residues 1152 to 1480 (DVDSLMRSVS…TEEEVQETRL (329 aa)) are Cytoplasmic-facing. Positions 1210–1443 (MTIKDLTAKY…KSLFQQAISH (234 aa)) constitute an ABC transporter 2 domain. Residues tyrosine 1219 and 1244-1251 (GRTGSGKS) each bind ATP. An interaction with GORASP2 region spans residues 1386-1480 (RALKQAFADC…TEEEVQETRL (95 aa)). A lipid anchor (S-palmitoyl cysteine) is attached at cysteine 1395. Residues serine 1444 and serine 1456 each carry the phosphoserine modification. Residues 1452 to 1480 (HRNSSKYKSPPQIASLKEETEEEVQETRL) are disordered. Residues 1470 to 1480 (ETEEEVQETRL) show a composition bias toward acidic residues. The PDZ-binding signature appears at 1478–1480 (TRL).

It belongs to the ABC transporter superfamily. ABCC family. CFTR transporter (TC 3.A.1.202) subfamily. In terms of assembly, monomer; does not require oligomerization for channel activity. May form oligomers in the membrane. Interacts with SLC26A3, SLC26A6 and NHERF1. Interacts with SHANK2. Interacts with MYO6. Interacts (via C-terminus) with GOPC (via PDZ domain); this promotes CFTR internalization and thereby decreases channel activity. Interacts with SLC4A7 through NHERF1. Found in a complex with MYO5B and RAB11A. Interacts with ANO1. Interacts with SLC26A8. Interacts with AHCYL1; the interaction increases CFTR activity. Interacts with CSE1L. The core-glycosylated form interacts with GORASP2 (via PDZ GRASP-type 1 domain) in respone to ER stress. Interacts with MARCHF2; the interaction leads to CFTR ubiqtuitination and degradation. Interacts with ADGRG2. N-glycosylated. In terms of processing, phosphorylated; cAMP treatment promotes phosphorylation and activates the channel. Dephosphorylation decreases the ATPase activity (in vitro). Phosphorylation at PKA sites activates the channel. Phosphorylation at PKC sites enhances the response to phosphorylation by PKA. Phosphorylated by AMPK; this inhibits channel activity. Post-translationally, ubiquitinated, leading to its degradation in the lysosome. Deubiquitination by USP10 in early endosomes enhances its endocytic recycling to the cell membrane. Ubiquitinated by RNF185 during ER stress. Ubiquitinated by MARCHF2.

The protein localises to the apical cell membrane. It is found in the early endosome membrane. It localises to the cell membrane. The protein resides in the recycling endosome membrane. Its subcellular location is the endoplasmic reticulum membrane. The protein localises to the nucleus. It catalyses the reaction ATP + H2O + closed Cl(-) channel = ADP + phosphate + open Cl(-) channel.. The catalysed reaction is chloride(in) = chloride(out). The enzyme catalyses hydrogencarbonate(in) = hydrogencarbonate(out). It carries out the reaction ATP + H2O = ADP + phosphate + H(+). Its function is as follows. Epithelial ion channel that plays an important role in the regulation of epithelial ion and water transport and fluid homeostasis. Mediates the transport of chloride ions across the cell membrane. Possesses an intrinsic ATPase activity and utilizes ATP to gate its channel; the passive flow of anions through the channel is gated by cycles of ATP binding and hydrolysis by the ATP-binding domains. The ion channel is also permeable to HCO(3)(-); selectivity depends on the extracellular chloride concentration. Exerts its function also by modulating the activity of other ion channels and transporters. Contributes to the regulation of the pH and the ion content of the epithelial fluid layer. Modulates the activity of the epithelial sodium channel (ENaC) complex, in part by regulating the cell surface expression of the ENaC complex. May regulate bicarbonate secretion and salvage in epithelial cells by regulating the transporter SLC4A7. Can inhibit the chloride channel activity of ANO1. Plays a role in the chloride and bicarbonate homeostasis during sperm epididymal maturation and capacitation. The sequence is that of Cystic fibrosis transmembrane conductance regulator from Ateles geoffroyi (Black-handed spider monkey).